The following is a 129-amino-acid chain: Glycine cleavage system H protein (129 aa).

The Lipoyl-binding domain occupies 22 to 103; that stretch reads TGTVGITDYA…AHTAWIMKIE (82 aa). K63 is modified (N6-lipoyllysine).

Belongs to the GcvH family. As to quaternary structure, the glycine cleavage system is composed of four proteins: P, T, L and H. (R)-lipoate is required as a cofactor.

In terms of biological role, the glycine cleavage system catalyzes the degradation of glycine. The H protein shuttles the methylamine group of glycine from the P protein to the T protein. The polypeptide is Glycine cleavage system H protein (Acidobacterium capsulatum (strain ATCC 51196 / DSM 11244 / BCRC 80197 / JCM 7670 / NBRC 15755 / NCIMB 13165 / 161)).